A 230-amino-acid polypeptide reads, in one-letter code: Phosphoribosylaminoimidazole-succinocarboxamide synthase (230 aa).

The protein belongs to the SAICAR synthetase family.

The enzyme catalyses 5-amino-1-(5-phospho-D-ribosyl)imidazole-4-carboxylate + L-aspartate + ATP = (2S)-2-[5-amino-1-(5-phospho-beta-D-ribosyl)imidazole-4-carboxamido]succinate + ADP + phosphate + 2 H(+). It participates in purine metabolism; IMP biosynthesis via de novo pathway; 5-amino-1-(5-phospho-D-ribosyl)imidazole-4-carboxamide from 5-amino-1-(5-phospho-D-ribosyl)imidazole-4-carboxylate: step 1/2. The protein is Phosphoribosylaminoimidazole-succinocarboxamide synthase of Thermotoga petrophila (strain ATCC BAA-488 / DSM 13995 / JCM 10881 / RKU-1).